A 1452-amino-acid chain; its full sequence is MRTLGTCLVTLAGLLLTAAGETFSGGCLFDEPYSTCGYSQADEDDFNWEQVNTLTKPTSDPWMPSGSFMLVNTSGKPEGQRAHLLLPQLKENDTHCIDFHYFVSSKSNAAPGLLNVYVKVNNGPLGNPIWNISGDPTRTWHRAELAISTFWPNFYQVIFEVVTSGHQGYLAIDEVKVLGHPCTRTPHFLRIQNVEVNAGQFATFQCSAIGRTVAGDRLWLQGIDVRDAPLKEIKVTSSRRFIASFNVVNTTKRDAGKYRCMICTEGGVGISNYAELVVKEPPVPIAPPQLASVGATYLWIQLNANSINGDGPIVAREVEYCTASGSWNDRQPVDSTSYKIGHLDPDTEYEISVLLTRPGEGGTGSPGPALRTRTKCADPMRGPRKLEVVEVKSRQITIRWEPFGYNVTRCHSYNLTVHYGYQVGGQEQVREEVSWDTDNSHPQHTITNLSPYTNVSVKLILMNPEGRKESQELTVQTDEDLPGAVPTESIQGSAFEEKIFLQWREPTQTYGVITLYEITYKAVSSFDPEIDLSNQSGRVSKLGNETHFLFFGLYPGTTYSFTIRASTAKGFGPPATNQFTTKISAPSMPAYEFETPLNQTDNTVTVMLKPAQSRGAPVSVYQIVVEEERPRRTKKTTEILKCYPVPIHFQNASILNSQYYFAAEFPADSLQAAQPFTIGDNKTYNGYWNTPLLPHKSYRIYYQAASRANGETKIDCVRVATKGAVTPKPVPEPEKQTDHTVKIAGVIAGILLFVIIFLGVVLVMKKRKLAKKRKETMSSTRQEMTVMVNSMDKSYAEQGTNCDEAFSFMGTHNLNGRSVSSPSSFTMKTNTLSTSVPNSYYPDETHTMASDTSSLAQPHTYKKREAADVPYQTGQLHPAIRVADLLQHITQMKCAEGYGFKEEYESFFEGQSAPWDSAKKDENRMKNRYGNIIAYDHSRVRLQMLEGDNNSDYINGNYIDGYHRPNHYIATQGPMQETIYDFWRMVWHENTASIIMVTNLVEVGRVKCCKYWPDDTEIYKDIKVTLIDTELLAEYVIRTFAVEKRGIHEIREIRQFHFTGWPDHGVPYHATGLLGFVRQVKSKSPPNAGPLVVHCSAGAGRTGCFIVIDIMLDMAEREGVVDIYNCVRELRSRRVNMVQTEEQYVFIHDAILEACLCGDTSIPASQVRSLYYDMNKLDPQTNSSQIKEEFRTLNMVTPTLRVEDCSIALLPRNHEKNRCMDILPPDRCLPFLITIDGESSNYINAALMDSYKQPSAFIVTQHPLPNTVKDFWRLVLDYHCTSVVMLNDVDPAQLCPQYWPENGVHRHGPIQVEFVSADLEEDIISRIFRIYNASRPQDGHRMVQQFQFLGWPMYRDTPVSKRSFLKLIRQVDKWQEEYNGGEGRTVVHCLNGGGRSGTFCAISIVCEMLRHQRTVDVFHAVKTLRNNKPNMVDLLDQYKFCYEVALEYLNSG.

The first 20 residues, 1 to 20 (MRTLGTCLVTLAGLLLTAAG), serve as a signal peptide directing secretion. The Extracellular portion of the chain corresponds to 21 to 742 (ETFSGGCLFD…PEKQTDHTVK (722 aa)). In terms of domain architecture, MAM spans 22–184 (TFSGGCLFDE…VKVLGHPCTR (163 aa)). Cys-27 and Cys-36 are oxidised to a cystine. N-linked (GlcNAc...) asparagine glycans are attached at residues Asn-72, Asn-92, Asn-131, and Asn-249. Intrachain disulfides connect Cys-96-Cys-182 and Cys-206-Cys-260. One can recognise an Ig-like C2-type domain in the interval 186 to 277 (PHFLRIQNVE…VGISNYAELV (92 aa)). 4 consecutive Fibronectin type-III domains span residues 284–379 (PIAP…CADP), 382–480 (GPRK…TDED), 481–587 (LPGA…SAPS), and 589–671 (PAYE…DSLQ). Asn-406, Asn-414, Asn-454, Asn-534, Asn-544, Asn-598, Asn-651, and Asn-681 each carry an N-linked (GlcNAc...) asparagine glycan. The helical transmembrane segment at 743 to 764 (IAGVIAGILLFVIIFLGVVLVM) threads the bilayer. Topologically, residues 765-1452 (KKRKLAKKRK…EVALEYLNSG (688 aa)) are cytoplasmic. Ser-821 carries the post-translational modification Phosphoserine. Tyrosine-protein phosphatase domains lie at 900 to 1154 (FKEE…ILEA) and 1186 to 1448 (IKEE…ALEY). Substrate-binding positions include Asp-1063, 1095 to 1101 (CSAGAGR), and Gln-1139. Catalysis depends on Cys-1095, which acts as the Phosphocysteine intermediate. Cys-1389 functions as the Phosphocysteine intermediate in the catalytic mechanism.

This sequence belongs to the protein-tyrosine phosphatase family. Receptor class 2B subfamily. As to quaternary structure, homodimer. As to expression, most abundant in lung, less in brain and heart.

It localises to the cell membrane. The enzyme catalyses O-phospho-L-tyrosyl-[protein] + H2O = L-tyrosyl-[protein] + phosphate. Its function is as follows. Receptor protein-tyrosine phosphatase that mediates homotypic cell-cell interactions and plays a role in adipogenic differentiation via modulation of p120 catenin/CTNND1 phosphorylation. Promotes CTNND1 dephosphorylation and prevents its cytoplasmic localization where it inhibits SLC2A4 membrane trafficking. In turn, SLC2A4 is directed to the plasma membrane and performs its glucose transporter function. This chain is Receptor-type tyrosine-protein phosphatase mu (Ptprm), found in Mus musculus (Mouse).